Here is a 597-residue protein sequence, read N- to C-terminus: uncharacterized protein (597 aa).

Residues 1–23 (MSHEGSRQARDRGVTRSKAEKAR) show a composition bias toward basic and acidic residues. Disordered stretches follow at residues 1–32 (MSHE…VPQV) and 171–192 (RESQ…NPRP). Residues 175–186 (EPTQSSEPSAEP) are compositionally biased toward low complexity. 2 positions are modified to phosphoserine: Ser237 and Ser241. Disordered regions lie at residues 302-335 (SLLS…MRLD) and 549-569 (EAEE…GVSK). Polar residues predominate over residues 557–568 (APEQQPIQTGVS).

This is an uncharacterized protein from Rattus norvegicus (Rat).